Reading from the N-terminus, the 235-residue chain is Deoxyribose-phosphate aldolase (235 aa).

Catalysis depends on D107, which acts as the Proton donor/acceptor. Catalysis depends on K167, which acts as the Schiff-base intermediate with acetaldehyde. The Proton donor/acceptor role is filled by K197.

This sequence belongs to the DeoC/FbaB aldolase family. DeoC type 1 subfamily. In terms of assembly, homotetramer.

It is found in the cytoplasm. It carries out the reaction 2-deoxy-D-ribose 5-phosphate = D-glyceraldehyde 3-phosphate + acetaldehyde. The protein operates within carbohydrate degradation; 2-deoxy-D-ribose 1-phosphate degradation; D-glyceraldehyde 3-phosphate and acetaldehyde from 2-deoxy-alpha-D-ribose 1-phosphate: step 2/2. Functionally, catalyzes a reversible aldol reaction between acetaldehyde and D-glyceraldehyde 3-phosphate to generate 2-deoxy-D-ribose 5-phosphate. This Aeropyrum pernix (strain ATCC 700893 / DSM 11879 / JCM 9820 / NBRC 100138 / K1) protein is Deoxyribose-phosphate aldolase.